Reading from the N-terminus, the 247-residue chain is ATP synthase subunit a, chloroplastic (247 aa).

5 helical membrane passes run Q38–I58, V95–L115, I134–S154, L199–L219, and G220–G240.

It belongs to the ATPase A chain family. F-type ATPases have 2 components, CF(1) - the catalytic core - and CF(0) - the membrane proton channel. CF(1) has five subunits: alpha(3), beta(3), gamma(1), delta(1), epsilon(1). CF(0) has four main subunits: a, b, b' and c.

It is found in the plastid. Its subcellular location is the chloroplast thylakoid membrane. In terms of biological role, key component of the proton channel; it plays a direct role in the translocation of protons across the membrane. In Glycine max (Soybean), this protein is ATP synthase subunit a, chloroplastic.